The chain runs to 75 residues: Small ribosomal subunit protein bS18 (75 aa).

Belongs to the bacterial ribosomal protein bS18 family. As to quaternary structure, part of the 30S ribosomal subunit. Forms a tight heterodimer with protein bS6.

Binds as a heterodimer with protein bS6 to the central domain of the 16S rRNA, where it helps stabilize the platform of the 30S subunit. The sequence is that of Small ribosomal subunit protein bS18 from Acinetobacter baylyi (strain ATCC 33305 / BD413 / ADP1).